We begin with the raw amino-acid sequence, 949 residues long: Valine--tRNA ligase (949 aa).

Residues 45-55 (PNVTGVLHMGH) carry the 'HIGH' region motif. The 'KMSKS' region motif lies at 561 to 565 (KMSKS). Position 564 (lysine 564) interacts with ATP. Positions 882–949 (EELLKQEKTR…EIKEKLMTLP (68 aa)) form a coiled coil.

This sequence belongs to the class-I aminoacyl-tRNA synthetase family. ValS type 1 subfamily. As to quaternary structure, monomer.

Its subcellular location is the cytoplasm. The enzyme catalyses tRNA(Val) + L-valine + ATP = L-valyl-tRNA(Val) + AMP + diphosphate. Functionally, catalyzes the attachment of valine to tRNA(Val). As ValRS can inadvertently accommodate and process structurally similar amino acids such as threonine, to avoid such errors, it has a 'posttransfer' editing activity that hydrolyzes mischarged Thr-tRNA(Val) in a tRNA-dependent manner. This Protochlamydia amoebophila (strain UWE25) protein is Valine--tRNA ligase.